The primary structure comprises 994 residues: Cation-chloride cotransporter 2 (994 aa).

The interval 1-28 is disordered; the sequence is MERGGFGGAGRHDEEAPAMRPAPQQRYR. The Cytoplasmic portion of the chain corresponds to 1 to 139; the sequence is MERGGFGGAG…GHPKETETKL (139 aa). The helical transmembrane segment at 140–160 threads the bilayer; sequence DTMMGVFVPCLQNILGIIYYI. Residues 161–174 lie on the Extracellular side of the membrane; sequence RFTWIVGMGGVWQS. A helical membrane pass occupies residues 175–195; sequence LVLVAFCGSCTFLTTISLSAI. Residues 196 to 221 lie on the Cytoplasmic side of the membrane; that stretch reads ATNGAMKGGGPYYLIGRALGPEVGVS. The chain crosses the membrane as a helical span at residues 222-242; sequence IGLCFFLGNAVAGAMYVLGAV. Residues 243-287 are Extracellular-facing; sequence ETFLDAVPSAEFFQESVTVVTNTFVNGTAAGNATTISTPNLHDLQ. N-linked (GlcNAc...) asparagine glycosylation is found at N268 and N274. A helical transmembrane segment spans residues 288–308; it reads VYGIIVTILLCFIVFGGVKII. Residues 309 to 311 lie on the Cytoplasmic side of the membrane; sequence NKV. A helical transmembrane segment spans residues 312-332; it reads APAFLIPVLFSILCIYIGVFI. Residues 333 to 372 lie on the Extracellular side of the membrane; it reads APRPNASKWITGLSITTLKDNWSSDYQRTNNAGVPDPNGS. Residues N337, N353, and N370 are each glycosylated (N-linked (GlcNAc...) asparagine). Residues 373-393 traverse the membrane as a helical segment; it reads IYWDFNALLGLYFPAVTGIMA. The Cytoplasmic portion of the chain corresponds to 394 to 412; that stretch reads GSNRSASLKDTQRSIPIGT. A helical membrane pass occupies residues 413–433; that stretch reads LHATISTTMMYLLSVFLFGAL. The Extracellular portion of the chain corresponds to 434–448; that stretch reads STREGLLTDRLLCAA. Residues 449 to 469 traverse the membrane as a helical segment; it reads VAWPSPAVVYAGIILSTLGAA. Over 470–505 the chain is Cytoplasmic; that stretch reads LQSLTGAPRLLAAIANDDILPVLNYFKAYEGSEPHV. A helical transmembrane segment spans residues 506–526; that stretch reads ATLFTSFICISCVIIGNLDVI. Residues 527–529 are Extracellular-facing; sequence TPT. The chain crosses the membrane as a helical span at residues 530-552; sequence ITMFFLLCYAGVNLSCFLLDLLD. Over 553–558 the chain is Cytoplasmic; the sequence is APSWRP. A helical transmembrane segment spans residues 559–579; that stretch reads RWKLHHWSLSLIGALLCIVIM. At 580–585 the chain is on the extracellular side; it reads FMISWT. A helical transmembrane segment spans residues 586–606; the sequence is FTVVSLALASLIYYYVSLKGK. Residues 607–994 are Cytoplasmic-facing; it reads AGDWGDGFKS…YRRDVVTLFT (388 aa).

The protein belongs to the SLC12A transporter family.

The protein resides in the membrane. In terms of biological role, probable cation/chloride cotransporter. The chain is Cation-chloride cotransporter 2 (CCC2) from Oryza sativa subsp. japonica (Rice).